The following is a 253-amino-acid chain: MFYIIGVGPAPGFITEKAAQILREADCVFYEDYTGPIDVETLRRYARSPPTRLTRRDLEDESGRRVLECLSRGKTAVLATAGDPMLATSHAALISIARSRGYSVEVVPGVSIVCAAFSASCLSIYKLGGVATVTYPRGGVYSARPYELVEQNLARGLHTLLLLDVREDGVFMPPRDAAEIMLKLEEREKRGVFDKGRPVVVVPKLGWGGRPAYLPLGELLGSDLEGPAVFIVPGGLSPVERECIEALSVLKSR.

S-adenosyl-L-methionine-binding positions include D83, L86, S111–I112, L163, and L205.

The protein belongs to the diphthine synthase family. Homodimer.

The enzyme catalyses 2-[(3S)-amino-3-carboxypropyl]-L-histidyl-[translation elongation factor 2] + 3 S-adenosyl-L-methionine = diphthine-[translation elongation factor 2] + 3 S-adenosyl-L-homocysteine + 3 H(+). The protein operates within protein modification; peptidyl-diphthamide biosynthesis. Functionally, S-adenosyl-L-methionine-dependent methyltransferase that catalyzes the trimethylation of the amino group of the modified target histidine residue in translation elongation factor 2 (EF-2), to form an intermediate called diphthine. The three successive methylation reactions represent the second step of diphthamide biosynthesis. This is Diphthine synthase from Pyrobaculum neutrophilum (strain DSM 2338 / JCM 9278 / NBRC 100436 / V24Sta) (Thermoproteus neutrophilus).